Consider the following 559-residue polypeptide: Tectonic-like complex member MKS1 (559 aa).

Positions 311–439 (LRLFVNGEVV…TVSTWRPVEL (129 aa)) constitute a C2 B9-type domain.

In terms of assembly, part of the tectonic-like complex (also named B9 complex). Interacts with TMEM107. Interacts with TCTN3, AHI1, TCTN1, TCTN2, CC2D2A. Interacts with FLNA. Interacts with TMEM67. Interacts with B9D1 and B9D2.

The protein resides in the cytoplasm. It localises to the cytoskeleton. Its subcellular location is the cilium basal body. It is found in the microtubule organizing center. The protein localises to the centrosome. In terms of biological role, component of the tectonic-like complex, a complex localized at the transition zone of primary cilia and acting as a barrier that prevents diffusion of transmembrane proteins between the cilia and plasma membranes. Involved in centrosome migration to the apical cell surface during early ciliogenesis. Required for ciliary structure and function, including a role in regulating length and appropriate number through modulating centrosome duplication. Required for cell branching morphology. The chain is Tectonic-like complex member MKS1 (MKS1) from Homo sapiens (Human).